The chain runs to 471 residues: Membrane-associated sulfotransferase kil1 (471 aa).

Residues 1 to 12 are Cytoplasmic-facing; the sequence is MSTTSMILTKKN. A helical; Signal-anchor for type II membrane protein transmembrane segment spans residues 13–33; it reads IIILSIIIITIIAYQFYITSP. Residues 34 to 471 are Lumenal-facing; the sequence is QSFPSSNTIT…LLNRDFKWQN (438 aa). N-linked (GlcNAc...) asparagine glycosylation is present at asparagine 47. 2 stretches are compositionally biased toward low complexity: residues 89-105 and 112-127; these read NQNE…NNNK and NNNN…NNNN. The disordered stretch occupies residues 89 to 127; that stretch reads NQNENQNQINNEYNNNKLNDEQENNNNNNYNNNNNNNNN. Residues 167–172, arginine 252, and serine 260 each bind 3'-phosphoadenylyl sulfate; that span reads KSGTTF. Asparagine 324 and asparagine 344 each carry an N-linked (GlcNAc...) asparagine glycan. Residue tyrosine 348 coordinates 3'-phosphoadenylyl sulfate.

The protein belongs to the sulfotransferase 1 family.

Its subcellular location is the membrane. Functionally, sulfotransferase involved in intracellular killing of bacteria. The sequence is that of Membrane-associated sulfotransferase kil1 (kil1) from Dictyostelium discoideum (Social amoeba).